The chain runs to 339 residues: Biotin synthase (339 aa).

The Radical SAM core domain maps to 55-282 (NAVQLSTLLS…KAVVRLSAGR (228 aa)). Residues Cys70, Cys74, and Cys77 each coordinate [4Fe-4S] cluster. [2Fe-2S] cluster is bound by residues Cys114, Cys145, Cys205, and Arg277.

It belongs to the radical SAM superfamily. Biotin synthase family. Homodimer. [4Fe-4S] cluster serves as cofactor. Requires [2Fe-2S] cluster as cofactor.

The enzyme catalyses (4R,5S)-dethiobiotin + (sulfur carrier)-SH + 2 reduced [2Fe-2S]-[ferredoxin] + 2 S-adenosyl-L-methionine = (sulfur carrier)-H + biotin + 2 5'-deoxyadenosine + 2 L-methionine + 2 oxidized [2Fe-2S]-[ferredoxin]. It participates in cofactor biosynthesis; biotin biosynthesis; biotin from 7,8-diaminononanoate: step 2/2. Its function is as follows. Catalyzes the conversion of dethiobiotin (DTB) to biotin by the insertion of a sulfur atom into dethiobiotin via a radical-based mechanism. This Burkholderia ambifaria (strain ATCC BAA-244 / DSM 16087 / CCUG 44356 / LMG 19182 / AMMD) (Burkholderia cepacia (strain AMMD)) protein is Biotin synthase.